The sequence spans 592 residues: Putative esterase (592 aa).

A helical membrane pass occupies residues 12–32 (LTLIAYLSVLMGVSVYFYVLI). N-linked (GlcNAc...) asparagine; by host glycans are attached at residues asparagine 68, asparagine 83, asparagine 95, asparagine 447, and asparagine 510. Histidine 513 serves as the catalytic Charge relay system. An N-linked (GlcNAc...) asparagine; by host glycan is attached at asparagine 528.

Belongs to the type-B carboxylesterase/lipase family.

Its subcellular location is the membrane. The catalysed reaction is a carboxylic ester + H2O = an alcohol + a carboxylate + H(+). The polypeptide is Putative esterase (Spodoptera frugiperda (Fall armyworm)).